Consider the following 51-residue polypeptide: Large ribosomal subunit protein eL39 (51 aa).

The protein belongs to the eukaryotic ribosomal protein eL39 family.

The chain is Large ribosomal subunit protein eL39 from Sulfurisphaera tokodaii (strain DSM 16993 / JCM 10545 / NBRC 100140 / 7) (Sulfolobus tokodaii).